Here is a 376-residue protein sequence, read N- to C-terminus: Lysocardiolipin acyltransferase 1 (376 aa).

A helical membrane pass occupies residues 9 to 29 (FILFLFAGSFFGSIFMLGPIL). Residue Asn35 is glycosylated (N-linked (GlcNAc...) asparagine). Residues 48–68 (ATWLTLPVALLETMFGVRVVI) form a helical membrane-spanning segment. The HXXXXD motif signature appears at 85–90 (HRTRVD). Residue Lys183 is modified to N6-acetyllysine. The next 2 helical transmembrane spans lie at 309–329 (LLSI…IYLY) and 336–356 (FIIS…LEII).

Belongs to the 1-acyl-sn-glycerol-3-phosphate acyltransferase family. In terms of tissue distribution, widely expressed with highest expression in heart, liver and 12.5 dpc aorta-gonad-mesonephros and lower levels in the 16 dpc fetal liver and adult bone marrow. In bone marrow, highest levels are found in B-cells compared with whole bone marrow, T-cells, erythrocytes, and granulocytes.

The protein localises to the endoplasmic reticulum membrane. The enzyme catalyses a 1-acyl-sn-glycero-3-phosphate + an acyl-CoA = a 1,2-diacyl-sn-glycero-3-phosphate + CoA. The catalysed reaction is a 1-acyl-sn-glycero-3-phospho-(1D-myo-inositol) + an acyl-CoA = a 1,2-diacyl-sn-glycero-3-phospho-(1D-myo-inositol) + CoA. It catalyses the reaction 1-acyl-sn-glycero-3-phospho-(1'-sn-glycerol) + an acyl-CoA = a 1,2-diacyl-sn-glycero-3-phospho-(1'-sn-glycerol) + CoA. It carries out the reaction 1-hexadecanoyl-sn-glycero-3-phosphate + (9Z)-octadecenoyl-CoA = 1-hexadecanoyl-2-(9Z-octadecenoyl)-sn-glycero-3-phosphate + CoA. The enzyme catalyses 1-(9Z-octadecenoyl)-sn-glycero-3-phosphate + (9Z)-octadecenoyl-CoA = 1,2-di-(9Z-octadecenoyl)-sn-glycero-3-phosphate + CoA. The catalysed reaction is 1-(9Z,12Z)-octadecadienoyl-sn-glycero-3-phosphate + (9Z)-octadecenoyl-CoA = 1-(9Z,12Z)-octadecadienoyl-2-(9Z)-octadecenoyl-sn-glycero-3-phosphate + CoA. It catalyses the reaction 1-(9Z,12Z,15Z)-octadecatrienoyl-sn-glycero-3-phosphate + (9Z)-octadecenoyl-CoA = 1-(9Z,12Z,15Z)-octadecatrienoyl-2-(9Z)-octadecenoyl-sn-glycero-3-phosphate + CoA. It carries out the reaction 1-(9Z-octadecenoyl)-sn-glycero-3-phosphate + hexadecanoyl-CoA = 1-(9Z)-octadecenoyl-2-hexadecanoyl-sn-glycero-3-phosphate + CoA. The enzyme catalyses 1-(9Z-octadecenoyl)-sn-glycero-3-phosphate + octadecanoyl-CoA = 1-(9Z-octadecenoyl)-2-octadecanoyl-sn-glycero-3-phosphate + CoA. The catalysed reaction is 1-acyl-sn-glycero-3-phospho-(1'-sn-glycerol) + (9Z)-octadecenoyl-CoA = 1-acyl-2-(9Z-octadecenoyl)-sn-glycero-3-phospho-(1'-sn-glycerol) + CoA. It catalyses the reaction a 1-acyl-sn-glycero-3-phospho-(1D-myo-inositol) + (9Z)-octadecenoyl-CoA = a 1-acyl-2-(9Z-octadecenoyl)-sn-glycero-3-phospho-(1D-myo-inositol) + CoA. It carries out the reaction 1-hexadecanoyl-sn-glycero-3-phospho-(1D-myo-inositol) + hexadecanoyl-CoA = 1,2-dihexadecanoyl-sn-glycero-3-phospho-(1D-myo-inositol) + CoA. The enzyme catalyses 1-hexadecanoyl-sn-glycero-3-phospho-(1D-myo-inositol) + octadecanoyl-CoA = 1-hexadecanoyl-2-octadecanoyl-sn-glycero-3-phospho-(1D-myo-inositol) + CoA. The catalysed reaction is 1-hexadecanoyl-sn-glycero-3-phospho-(1D-myo-inositol) + (9Z)-octadecenoyl-CoA = 1-hexadecanoyl-2-(9Z-octadecenoyl)-sn-glycero-3-phospho-(1D-myo-inositol) + CoA. It catalyses the reaction 1-hexadecanoyl-sn-glycero-3-phospho-(1D-myo-inositol) + (9Z,12Z)-octadecadienoyl-CoA = 1-hexadecanoyl-2-(9Z,12Z-octadecadienoyl)-sn-glycero-3-phospho-(1D-myo-inositol) + CoA. It carries out the reaction 1-hexadecanoyl-sn-glycero-3-phospho-(1D-myo-inositol) + (5Z,8Z,11Z,14Z)-eicosatetraenoyl-CoA = 1-hexadecanoyl-2-(5Z,8Z,11Z,14Z-eicosatetraenoyl)-sn-glycero-3-phospho-D-myo-inositol + CoA. The enzyme catalyses 1-hexadecanoyl-sn-glycero-3-phospho-(1'-sn-glycerol) + hexadecanoyl-CoA = 1,2-dihexadecanoyl-sn-glycero-3-phospho-(1'-sn-glycerol) + CoA. The catalysed reaction is 1-hexadecanoyl-sn-glycero-3-phospho-(1'-sn-glycerol) + octadecanoyl-CoA = 1-hexadecanoyl-2-octadecanoyl-sn-glycero-3-phospho-(1'-sn-glycerol) + CoA. It catalyses the reaction 1-hexadecanoyl-sn-glycero-3-phospho-(1'-sn-glycerol) + (9Z)-octadecenoyl-CoA = 1-hexadecanoyl-2-(9Z-octadecenoyl)-sn-glycero-3-phospho-(1'-sn-glycerol) + CoA. It carries out the reaction 1-hexadecanoyl-sn-glycero-3-phospho-(1'-sn-glycerol) + (9Z,12Z)-octadecadienoyl-CoA = 1-hexadecanoyl-2-(9Z,12Z-octadecadienoyl)-sn-glycero-3-phospho-(1'-sn-glycerol) + CoA. The enzyme catalyses 1-tetradecanoyl-sn-glycero-3-phospho-(1'-sn-glycerol) + (9Z)-octadecenoyl-CoA = 1-tetradecanoyl-2-(9Z-octadecenoyl)-sn-glycero-3-phospho-(1'-sn-glycerol) + CoA. The catalysed reaction is 1-octadecanoyl-sn-glycero-3-phospho-(1'-sn-glycerol) + (9Z)-octadecenoyl-CoA = 1-octadecanoyl-2-(9Z-octadecenoyl)-sn-glycero-3-phospho-(1'-sn-glycerol) + CoA. It catalyses the reaction 1-(9Z-octadecenoyl)-sn-glycero-3-phospho-(1'-sn-glycerol) + (9Z)-octadecenoyl-CoA = 1,2-di-(9Z-octadecenoyl)-sn-glycero-3-phospho-(1'-sn-glycerol) + CoA. It carries out the reaction 1-hexadecanoyl-sn-glycero-3-phospho-(1D-myo-inositol) + dodecanoyl-CoA = 1-hexadecanoyl-2-dodecanoyl-sn-glycero-3-phospho-(1D-myo-inositol) + CoA. The enzyme catalyses 1',3'-bis-[1-acyl-sn-glycero-3-phospho]-glycerol + (9Z)-octadecenoyl-CoA = 1'-[1-acyl-2-(9Z)-octadecenoyl-sn-glycero-3-phospho],3'-[1-acyl,2-hydroxy-sn-glycero-3-phospho]-glycerol + CoA. The catalysed reaction is 1'-[1,2-diacyl-sn-glycero-3-phospho],3'-[1-acyl-sn-glycero-3-phospho]-glycerol + (9Z)-octadecenoyl-CoA = 1'-[1,2-diacyl-sn-glycero-3-phospho],3'-[1-acyl,2-(9Z)-octadecenoyl-sn-glycero-3-phospho]-glycerol + CoA. It catalyses the reaction 1'-[1,2-diacyl-sn-glycero-3-phospho],3'-[1-acyl-sn-glycero-3-phospho]-glycerol + (9Z,12Z)-octadecadienoyl-CoA = 1'-[1,2-diacyl-sn-glycero-3-phospho],3'-[1-acyl,2-(9Z,12Z)-octadecadienoyl-sn-glycero-3-phospho]-glycerol + CoA. It carries out the reaction 1'-[1,2-diacyl-sn-glycero-3-phospho],3'-[1-acyl-sn-glycero-3-phospho]-glycerol + dodecanoyl-CoA = 1'-[1,2-diacyl-sn-glycero-3-phospho],3'-[1-acyl,2-dodecanoyl-sn-glycero-3-phospho]-glycerol + CoA. The enzyme catalyses 1',3'-bis-[1-acyl-sn-glycero-3-phospho]-glycerol + dodecanoyl-CoA = 1'-[1-acyl-2-dodecanoyl-sn-glycero-3-phospho],3'-[1-acyl,2-hydroxy-sn-glycero-3-phospho]-glycerol + CoA. The catalysed reaction is a 1-acyl-sn-glycero-3-phosphate + (9Z)-octadecenoyl-CoA = a 1-acyl-2-(9Z-octadecenoyl)-sn-glycero-3-phosphate + CoA. It catalyses the reaction 1',3'-bis-[1-acyl-sn-glycero-3-phospho]-glycerol + (9Z,12Z)-octadecadienoyl-CoA = 1'-[1-acyl-2-(9Z,12Z)-octadecadienoyl-sn-glycero-3-phospho],3'-[1-acyl,2-hydroxy-sn-glycero-3-phospho]-glycerol + CoA. It carries out the reaction 1',3'-bis-[1-acyl-sn-glycero-3-phospho]-glycerol + hexadecanoyl-CoA = 1'-[1-acyl-2-hexadecanoyl-sn-glycero-3-phospho],3'-[1-acyl,2-hydroxy-sn-glycero-3-phospho]-glycerol + CoA. The enzyme catalyses 1',3'-bis-[1-acyl-sn-glycero-3-phospho]-glycerol + octadecanoyl-CoA = 1'-[1-acyl-2-octadecanoyl-sn-glycero-3-phospho],3'-[1-acyl,2-hydroxy-sn-glycero-3-phospho]-glycerol + CoA. The catalysed reaction is 1'-[1,2-diacyl-sn-glycero-3-phospho],3'-[1-acyl-sn-glycero-3-phospho]-glycerol + octanoyl-CoA = 1'-[1,2-diacyl-sn-glycero-3-phospho],3'-[1-acyl,2-octanoyl-sn-glycero-3-phospho]-glycerol + CoA. It catalyses the reaction 1',3'-bis-[1-acyl-sn-glycero-3-phospho]-glycerol + octanoyl-CoA = 1'-[1-acyl-2-octanoyl-sn-glycero-3-phospho],3'-[1-acyl,2-hydroxy-sn-glycero-3-phospho]-glycerol + CoA. It carries out the reaction 1'-[1,2-diacyl-sn-glycero-3-phospho],3'-[1-acyl-sn-glycero-3-phospho]-glycerol + hexadecanoyl-CoA = 1'-[1,2-diacyl-sn-glycero-3-phospho],3'-[1-acyl,2-hexadecanoyl-sn-glycero-3-phospho]-glycerol + CoA. The enzyme catalyses 1'-[1,2-diacyl-sn-glycero-3-phospho],3'-[1-acyl-sn-glycero-3-phospho]-glycerol + (5Z,8Z,11Z,14Z)-eicosatetraenoyl-CoA = 1'-[1,2-diacyl-sn-glycero-3-phospho],3'-[1-acyl,2-(5Z,8Z,11Z,14Z)-eicosatetraenoyl-sn-glycero-3-phospho]-glycerol + CoA. The catalysed reaction is 1',3'-bis-[1-acyl-sn-glycero-3-phospho]-glycerol + (5Z,8Z,11Z,14Z)-eicosatetraenoyl-CoA = 1'-[1-acyl-2-(5Z,8Z,11Z,14Z)-eicosatetraenoyl-sn-glycero-3-phospho],3'-[1-acyl,2-hydroxy-sn-glycero-3-phospho]-glycerol + CoA. It catalyses the reaction a 1-acyl-sn-glycero-3-phospho-(1D-myo-inositol) + octadecanoyl-CoA = a 1-acyl-2-octadecanoyl-sn-glycero-3-phospho-(1D-myo-inositol) + CoA. It carries out the reaction a 2-acyl-sn-glycero-3-phospho-D-myo-inositol + octadecanoyl-CoA = 1-octadecanoyl-2-acyl-sn-glycero-3-phospho-1D-myo-inositol + CoA. It functions in the pathway phospholipid metabolism; CDP-diacylglycerol biosynthesis; CDP-diacylglycerol from sn-glycerol 3-phosphate: step 2/3. Functionally, exhibits acyl-CoA:lysocardiolipin acyltransferase (ALCAT) activity; catalyzes the reacylation of lyso-cardiolipin to cardiolipin (CL), a key step in CL remodeling. Recognizes both monolysocardiolipin and dilysocardiolipin as substrates with a preference for linoleoyl-CoA and oleoyl-CoA as acyl donors. Also exhibits 1-acyl-sn-glycerol-3-phosphate acyltransferase activity (AGPAT) activity; converts 1-acyl-sn-glycerol-3- phosphate (lysophosphatidic acid or LPA) into 1,2-diacyl-sn-glycerol-3- phosphate (phosphatidic acid or PA) by incorporating an acyl moiety at the sn-2 position of the glycerol backbone. Possesses lysophosphatidylinositol acyltransferase (LPIAT) activity. Possesses lysophosphatidylglycerol acyltransferase (LPGAT) activity. Required for establishment of the hematopoietic and endothelial lineages. This is Lysocardiolipin acyltransferase 1 (Lclat1) from Mus musculus (Mouse).